The sequence spans 172 residues: Shikimate kinase (172 aa).

Position 14–19 (G14–T19) interacts with ATP. Residue T18 participates in Mg(2+) binding. Positions 36, 60, and 82 each coordinate substrate. Residue R119 participates in ATP binding. R137 serves as a coordination point for substrate.

It belongs to the shikimate kinase family. In terms of assembly, monomer. Mg(2+) serves as cofactor.

The protein localises to the cytoplasm. The catalysed reaction is shikimate + ATP = 3-phosphoshikimate + ADP + H(+). The protein operates within metabolic intermediate biosynthesis; chorismate biosynthesis; chorismate from D-erythrose 4-phosphate and phosphoenolpyruvate: step 5/7. Its function is as follows. Catalyzes the specific phosphorylation of the 3-hydroxyl group of shikimic acid using ATP as a cosubstrate. The sequence is that of Shikimate kinase from Thermobifida fusca (strain YX).